Reading from the N-terminus, the 332-residue chain is Ketol-acid reductoisomerase (NADP(+)) (332 aa).

In terms of domain architecture, KARI N-terminal Rossmann spans 1–182 (MAVIYYDKDC…GSNRAGILET (182 aa)). NADP(+)-binding positions include 25–28 (YGAQ) and 83–86 (DTSQ). Residue histidine 108 is part of the active site. Glycine 134 lines the NADP(+) pocket. Residues 183 to 328 (TFAEETETDL…AELRSMMSWL (146 aa)) form the KARI C-terminal knotted domain. Positions 191, 195, 227, and 231 each coordinate Mg(2+). A substrate-binding site is contributed by serine 252.

It belongs to the ketol-acid reductoisomerase family. Mg(2+) is required as a cofactor.

The catalysed reaction is (2R)-2,3-dihydroxy-3-methylbutanoate + NADP(+) = (2S)-2-acetolactate + NADPH + H(+). The enzyme catalyses (2R,3R)-2,3-dihydroxy-3-methylpentanoate + NADP(+) = (S)-2-ethyl-2-hydroxy-3-oxobutanoate + NADPH + H(+). The protein operates within amino-acid biosynthesis; L-isoleucine biosynthesis; L-isoleucine from 2-oxobutanoate: step 2/4. It functions in the pathway amino-acid biosynthesis; L-valine biosynthesis; L-valine from pyruvate: step 2/4. Involved in the biosynthesis of branched-chain amino acids (BCAA). Catalyzes an alkyl-migration followed by a ketol-acid reduction of (S)-2-acetolactate (S2AL) to yield (R)-2,3-dihydroxy-isovalerate. In the isomerase reaction, S2AL is rearranged via a Mg-dependent methyl migration to produce 3-hydroxy-3-methyl-2-ketobutyrate (HMKB). In the reductase reaction, this 2-ketoacid undergoes a metal-dependent reduction by NADPH to yield (R)-2,3-dihydroxy-isovalerate. The polypeptide is Ketol-acid reductoisomerase (NADP(+)) (Dehalococcoides mccartyi (strain CBDB1)).